The chain runs to 61 residues: Protein translocase subunit SecE (61 aa).

Residues 39 to 59 form a helical membrane-spanning segment; it reads LGILVIGLVGMLIRIIGILML.

The protein belongs to the SecE/SEC61-gamma family. As to quaternary structure, component of the Sec protein translocase complex. Heterotrimer consisting of SecY (alpha), SecG (beta) and SecE (gamma) subunits. The heterotrimers can form oligomers, although 1 heterotrimer is thought to be able to translocate proteins. Interacts with the ribosome. May interact with SecDF, and other proteins may be involved.

The protein resides in the cell membrane. Its function is as follows. Essential subunit of the Sec protein translocation channel SecYEG. Clamps together the 2 halves of SecY. May contact the channel plug during translocation. The polypeptide is Protein translocase subunit SecE (Pyrococcus horikoshii (strain ATCC 700860 / DSM 12428 / JCM 9974 / NBRC 100139 / OT-3)).